The primary structure comprises 196 residues: ATP-dependent Clp protease proteolytic subunit 1 (196 aa).

Catalysis depends on Ser-96, which acts as the Nucleophile. His-121 is a catalytic residue.

Belongs to the peptidase S14 family. As to quaternary structure, fourteen ClpP subunits assemble into 2 heptameric rings which stack back to back to give a disk-like structure with a central cavity, resembling the structure of eukaryotic proteasomes.

It is found in the cytoplasm. The enzyme catalyses Hydrolysis of proteins to small peptides in the presence of ATP and magnesium. alpha-casein is the usual test substrate. In the absence of ATP, only oligopeptides shorter than five residues are hydrolyzed (such as succinyl-Leu-Tyr-|-NHMec, and Leu-Tyr-Leu-|-Tyr-Trp, in which cleavage of the -Tyr-|-Leu- and -Tyr-|-Trp bonds also occurs).. In terms of biological role, cleaves peptides in various proteins in a process that requires ATP hydrolysis. Has a chymotrypsin-like activity. Plays a major role in the degradation of misfolded proteins. This Prochlorococcus marinus (strain SARG / CCMP1375 / SS120) protein is ATP-dependent Clp protease proteolytic subunit 1.